Consider the following 210-residue polypeptide: Ras-related protein Rab-8 (210 aa).

15–22 (GDSGVGKT) contacts GTP. Positions 37–45 (FISTIGIDF) match the Effector region motif. Residues 63–67 (DTAGQ) and 121–124 (NKCD) contribute to the GTP site. Cysteine 207 is subject to Cysteine methyl ester. Residue cysteine 207 is the site of S-geranylgeranyl cysteine attachment. A propeptide spans 208-210 (SLL) (removed in mature form).

It belongs to the small GTPase superfamily. Rab family.

It localises to the cell membrane. The chain is Ras-related protein Rab-8 from Diplobatis ommata (Ocellated electric ray).